Reading from the N-terminus, the 437-residue chain is Elongation factor 1-gamma (437 aa).

Ala-2 is subject to N-acetylalanine. The 86-residue stretch at 2–87 (AAGTLYTYPE…YVSNEELRGS (86 aa)) folds into the GST N-terminal domain. Residues 88–216 (TPEAAAQVVQ…VKLCEKMAQF (129 aa)) enclose the GST C-terminal domain. N6-acetyllysine occurs at positions 147 and 212. Residues 221–254 (FAESQPKKDTPRKEKGSREEKQKPQAERKEEKKA) show a composition bias toward basic and acidic residues. A disordered region spans residues 221–268 (FAESQPKKDTPRKEKGSREEKQKPQAERKEEKKAAAPAPEEEMDECEQ). Lys-253 is covalently cross-linked (Glycyl lysine isopeptide (Lys-Gly) (interchain with G-Cter in SUMO1)). Positions 276-437 (AKDPFAHLPK…KAVNQGKIFK (162 aa)) constitute an EF-1-gamma C-terminal domain. A Glycyl lysine isopeptide (Lys-Gly) (interchain with G-Cter in SUMO2) cross-link involves residue Lys-285. The residue at position 401 (Lys-401) is an N6-acetyllysine. Lys-434 carries the post-translational modification N6-acetyllysine; alternate. N6-malonyllysine; alternate is present on Lys-434.

As to quaternary structure, EF-1 is composed of four subunits: alpha, beta, delta, and gamma.

Functionally, probably plays a role in anchoring the complex to other cellular components. The chain is Elongation factor 1-gamma (Eef1g) from Mus musculus (Mouse).